A 163-amino-acid polypeptide reads, in one-letter code: Developmental pluripotency-associated protein 3 (163 aa).

Preferentially expressed in oocyte.

The protein localises to the nucleus. The protein resides in the cytoplasm. Its function is as follows. Primordial germ cell (PGCs)-specific protein involved in epigenetic chromatin reprogramming in the zygote following fertilization. In zygotes, DNA demethylation occurs selectively in the paternal pronucleus before the first cell division, while the adjacent maternal pronucleus and certain paternally-imprinted loci are protected from this process. Participates in protection of DNA methylation in the maternal pronucleus by preventing conversion of 5mC to 5hmC: specifically recognizes and binds histone H3 dimethylated at 'Lys-9' (H3K9me2) on maternal genome, and protects maternal genome from TET3-mediated conversion to 5hmC and subsequent DNA demethylation. Does not bind paternal chromatin, which is mainly packed into protamine and does not contain much H3K9me2 mark. Also protects imprinted loci that are marked with H3K9me2 in mature sperm from DNA demethylation in early embryogenesis. May be important for the totipotent/pluripotent states continuing through preimplantation development. Also involved in chromatin condensation in oocytogenesis. This chain is Developmental pluripotency-associated protein 3 (DPPA3), found in Bos taurus (Bovine).